The primary structure comprises 219 residues: Octanoyltransferase (219 aa).

The BPL/LPL catalytic domain occupies Asp31–Gln206. Substrate is bound by residues Arg70 to His77, Ser137 to Gly139, and Gly150 to Ala152. Cys168 serves as the catalytic Acyl-thioester intermediate.

Belongs to the LipB family.

The protein localises to the cytoplasm. It carries out the reaction octanoyl-[ACP] + L-lysyl-[protein] = N(6)-octanoyl-L-lysyl-[protein] + holo-[ACP] + H(+). It functions in the pathway protein modification; protein lipoylation via endogenous pathway; protein N(6)-(lipoyl)lysine from octanoyl-[acyl-carrier-protein]: step 1/2. Its function is as follows. Catalyzes the transfer of endogenously produced octanoic acid from octanoyl-acyl-carrier-protein onto the lipoyl domains of lipoate-dependent enzymes. Lipoyl-ACP can also act as a substrate although octanoyl-ACP is likely to be the physiological substrate. The chain is Octanoyltransferase from Vibrio atlanticus (strain LGP32) (Vibrio splendidus (strain Mel32)).